The sequence spans 73 residues: Neuropeptide-like protein 29 (73 aa).

Positions 1–22 are cleaved as a signal peptide; the sequence is MISTSSILVLVVLLACFMAASA. Residues Y29, Y39, Y47, Y55, and Y63 each carry the tyrosine amide modification. Residue W71 is modified to Tryptophan amide.

Belongs to the YARP (YGGW-amide related peptide) family. Weakly or not expressed in absence of infection. Upon infection by D.coniospora, it is expressed in hypoderm. Also expressed in perivulval cells when D.coniospora spores adhere to this region. Expressed in hypodermis upon physical injury.

It is found in the secreted. Antimicrobial peptides that have antibacterial activity against the Gram-negative bacteria S.marcescens. Has antifungal activity against D.coniospora. May play a role in response to physical injury and osmotic stress. Through the neuropeptide receptor nlp-29, induces sleep upon activation of the innate immune response to molting and injury to the adult epidermis. In Caenorhabditis elegans, this protein is Neuropeptide-like protein 29.